Reading from the N-terminus, the 379-residue chain is Probable pectin lyase A (379 aa).

A signal peptide spans 1 to 20 (MKYSTIFSAAAAVFAGSAAA). 2 disulfides stabilise this stretch: C83–C102 and C92–C226. A glycan (N-linked (GlcNAc...) asparagine) is linked at N129. R256 is a catalytic residue. C322 and C330 are oxidised to a cystine.

This sequence belongs to the polysaccharide lyase 1 family.

It localises to the secreted. The catalysed reaction is Eliminative cleavage of (1-&gt;4)-alpha-D-galacturonan methyl ester to give oligosaccharides with 4-deoxy-6-O-methyl-alpha-D-galact-4-enuronosyl groups at their non-reducing ends.. In terms of biological role, pectinolytic enzymes consist of four classes of enzymes: pectin lyase, polygalacturonase, pectin methylesterase and rhamnogalacturonase. Among pectinolytic enzymes, pectin lyase is the most important in depolymerization of pectin, since it cleaves internal glycosidic bonds of highly methylated pectins. In Aspergillus niger (strain ATCC MYA-4892 / CBS 513.88 / FGSC A1513), this protein is Probable pectin lyase A (pelA).